A 341-amino-acid polypeptide reads, in one-letter code: Phosphate acyltransferase (341 aa).

Belongs to the PlsX family. In terms of assembly, homodimer. Probably interacts with PlsY.

Its subcellular location is the cytoplasm. It catalyses the reaction a fatty acyl-[ACP] + phosphate = an acyl phosphate + holo-[ACP]. It participates in lipid metabolism; phospholipid metabolism. In terms of biological role, catalyzes the reversible formation of acyl-phosphate (acyl-PO(4)) from acyl-[acyl-carrier-protein] (acyl-ACP). This enzyme utilizes acyl-ACP as fatty acyl donor, but not acyl-CoA. The chain is Phosphate acyltransferase from Lacticaseibacillus casei (strain BL23) (Lactobacillus casei).